The following is a 1615-amino-acid chain: Low-density lipoprotein receptor-related protein 5 (1615 aa).

The N-terminal stretch at 1–31 (MEAAPPGPPWPLLLLLLLLLALCGCPAPAAA) is a signal peptide. Residues 32-288 (SPLLLFANRR…YSPMDIQVLS (257 aa)) are beta-propeller 1. Over 32–1384 (SPLLLFANRR…PPSDDSPAHS (1353 aa)) the chain is Extracellular. LDL-receptor class B repeat units follow at residues 75–119 (GAVY…DWVG), 120–162 (KKLY…DPAH), 163–206 (GYMY…DLEE), 207–247 (QKLY…TLSG), and 248–290 (DTLY…LSQE). A YWTD 1 repeat occupies 78-81 (YWTD). Asn-93 is a glycosylation site (N-linked (GlcNAc...) asparagine). One copy of the YWTD 2 repeat lies at 123 to 126 (YWTD). N-linked (GlcNAc...) asparagine glycosylation occurs at Asn-138. One copy of the YWTD 3 repeat lies at 166–169 (YWTD). Residues 251–254 (YWTD) form a YWTD 4 repeat. The EGF-like 1 domain occupies 295–337 (FHTRCEEDNGGCSHLCLLSPSEPFYTCACPTGVQLQDNGRTCK). 3 disulfides stabilise this stretch: Cys-299-Cys-310, Cys-306-Cys-321, and Cys-323-Cys-336. Residues 341-602 (EEVLLLARRT…AVNVAKVVGT (262 aa)) are beta-propeller 2. LDL-receptor class B repeat units lie at residues 385 to 427 (GYVY…DWVA), 428 to 470 (RNLY…HPVM), 471 to 514 (GLMY…DLQE), 515 to 557 (GKLY…LGDF), and 558 to 600 (IYWT…AKVV). 2 YWTD repeats span residues 388–391 (YWTD) and 431–434 (YWTD). A glycan (N-linked (GlcNAc...) asparagine) is linked at Asn-446. The stretch at 474 to 477 (YWTD) is one YWTD 7 repeat. The N-linked (GlcNAc...) asparagine glycan is linked to Asn-499. The stretch at 559–562 (YWTD) is one YWTD 8 repeat. The EGF-like 2 domain occupies 601 to 641 (GTNPCADRNGGCSHLCFFTPHATRCGCPIGLELLSDMKTCI). Cystine bridges form between Cys-605-Cys-616, Cys-612-Cys-625, and Cys-627-Cys-640. Positions 644 to 903 (EAFLVFTSRA…VFHSSRQDGL (260 aa)) are beta-propeller 3. LDL-receptor class B repeat units lie at residues 687–729 (NHIY…DWMG), 730–772 (KNLY…DPTK), 773–815 (GYIY…DYAD), 816–855 (QRLYWTDLDTNMIESSNMLGQERVVIADDLPHPFGLTQYS), and 856–898 (DYIY…FHSS). The stretch at 690–693 (YWTD) is one YWTD 9 repeat. A glycan (N-linked (GlcNAc...) asparagine) is linked at Asn-705. 2 YWTD repeats span residues 819–822 (YWTD) and 859–862 (YWTD). N-linked (GlcNAc...) asparagine glycosylation occurs at Asn-878. One can recognise an EGF-like 3 domain in the interval 902 to 942 (GLNDCMHNNGQCGQLCLAIPGGHRCGCASHYTLDPSSRNCS). Cystine bridges form between Cys-906–Cys-917, Cys-913–Cys-926, and Cys-928–Cys-941. The tract at residues 945–1212 (TTFLLFSQKS…AVEEVSLEEF (268 aa)) is beta-propeller 4. LDL-receptor class B repeat units follow at residues 989-1035 (KFIY…DIYS), 1036-1078 (RTLF…NAER), 1079-1123 (GYLY…DNTL), 1124-1164 (GKLF…TILG), and 1165-1207 (KHLY…VEEV). In terms of domain architecture, EGF-like 4 spans 1213-1254 (SAHPCARDNGGCSHICIAKGDGTPRCSCPVHLVLLQNLLTCG). Intrachain disulfides connect Cys-1217–Cys-1228, Cys-1224–Cys-1238, Cys-1240–Cys-1253, Cys-1259–Cys-1273, Cys-1266–Cys-1286, Cys-1280–Cys-1295, Cys-1298–Cys-1310, Cys-1305–Cys-1323, Cys-1317–Cys-1332, Cys-1336–Cys-1348, Cys-1343–Cys-1361, and Cys-1355–Cys-1370. LDL-receptor class A domains are found at residues 1258 to 1296 (TCSPDQFACATGEIDCIPGAWRCDGFPECDDQSDEEGCP), 1297 to 1333 (VCSAAQFPCARGQCVDLRLRCDGEADCQDRSDEADCD), and 1335 to 1371 (ICLPNQFRCASGQCVLIKQQCDSFPDCIDGSDELMCE). The helical transmembrane segment at 1385 to 1407 (SAIGPVIGIILSLFVMGGVYFVC) threads the bilayer. Residues 1408-1615 (QRVVCQRYAG…PPPSPCTDSS (208 aa)) lie on the Cytoplasmic side of the membrane. Positions 1475-1501 (RNHVTGASSSSSSSTKATLYPPILNPP) are disordered. Residues 1500–1506 (PPPSPAT) carry the PPPSP motif A motif. The short motif at 1538–1545 (PPTTPCST) is the PPPSP motif B element. The interval 1568–1615 (SDSDPYPPPPTPHSQYLSAEDSCPPSPATERSYFHLFPPPPSPCTDSS) is disordered. A PPPSP motif C motif is present at residues 1574 to 1581 (PPPPTPHS). A PPPSP motif D motif is present at residues 1591–1596 (PPSPAT). Positions 1604-1615 (FPPPPSPCTDSS) are enriched in pro residues. The PPPSP motif E signature appears at 1605 to 1612 (PPPPSPCT).

It belongs to the LDLR family. Homodimer; disulfide-linked. Forms phosphorylated oligomer aggregates on Wnt-signaling. Component of a Wnt-signaling complex that contains a WNT protein, a FZD protein and LRP5 or LRP6. Interacts with FZD8; the interaction is formed on WNT-binding and signaling. Interacts (via the phosphorylated PPPSP motif domains) with AXIN1; the interaction prevents inhibition of beta-catenin phosphorylation and signaling and is enhanced in the presence of GSK3B and WNT1 or WNT3A. Interacts (via beta-propeller regions 3 and 4) with DKK1; the interaction, enhanced by MESD and/or KREMEN, inhibits beta-catenin signaling by preventing GSK3-mediated phosphorylation of the PPPSP motifs and subsequent, AXIN1 binding. Interacts with MESD; the interaction prevents the formation of LRP5 aggregates, targets LRP5 to the plasma membrane and, when complexed with KREMEN2, increases DKK1 binding. Interacts with CSNK1E. Interacts with SOST; the interaction antagonizes canonical Wnt signaling. Interacts with APCDD1. Interacts with CAPRIN2. In terms of processing, phosphorylation of cytoplasmic PPPSP motifs regulates the signal transduction of the Wnt signaling pathway through acting as a docking site for AXIN1. As to expression, widely expressed, with the highest level of expression in the liver and in aorta.

Its subcellular location is the membrane. The protein localises to the endoplasmic reticulum. Functionally, acts as a coreceptor with members of the frizzled family of seven-transmembrane spanning receptors to transduce signal by Wnt proteins. Activates the canonical Wnt signaling pathway that controls cell fate determination and self-renewal during embryonic development and adult tissue regeneration. In particular, may play an important role in the development of the posterior patterning of the epiblast during gastrulation. During bone development, regulates osteoblast proliferation and differentiation thus determining bone mass. Mechanistically, the formation of the signaling complex between Wnt ligand, frizzled receptor and LRP5 coreceptor promotes the recruitment of AXIN1 to LRP5, stabilizing beta-catenin/CTNNB1 and activating TCF/LEF-mediated transcriptional programs. Acts as a coreceptor for non-Wnt proteins, such as norrin/NDP. Binding of norrin/NDP to frizzled 4/FZD4-LRP5 receptor complex triggers beta-catenin/CTNNB1-dependent signaling known to be required for retinal vascular development. Plays a role in controlling postnatal vascular regression in retina via macrophage-induced endothelial cell apoptosis. This chain is Low-density lipoprotein receptor-related protein 5, found in Homo sapiens (Human).